A 945-amino-acid polypeptide reads, in one-letter code: Kinesin-like protein KIN-UA (945 aa).

Residues 1–54 (MAANGRASVRPVERHGAPPRPAGRSRSVAPPSRRPSPSPSRARPAAADNDGGSD) form a disordered region. Low complexity predominate over residues 22 to 31 (AGRSRSVAPP). Positions 57–399 (RVRVAVRLRP…IMFGQRAMKI (343 aa)) constitute a Kinesin motor domain. Residue 142-149 (GQTGTGKT) participates in ATP binding. The D-BOX motif lies at 369 to 377 (RTSLIVTIG). Residues 415 to 644 (YKKVEHEVDH…ILRLKQSLAD (230 aa)) are a coiled coil. ARM repeat units follow at residues 683 to 722 (RSNI…NLAA), 724 to 764 (DVNQ…NLAM), 766 to 806 (GSNQ…NLCG), and 808 to 847 (EKLH…NFAK).

This sequence belongs to the TRAFAC class myosin-kinesin ATPase superfamily. Kinesin family. Ungrouped subfamily.

The protein localises to the cytoplasm. The protein resides in the cytoskeleton. In Oryza sativa subsp. japonica (Rice), this protein is Kinesin-like protein KIN-UA.